Consider the following 97-residue polypeptide: Eotaxin (97 aa).

An N-terminal signal peptide occupies residues 1–23; sequence MQSSTALLFLLLTVTSFTSQVLA. Disulfide bonds link Cys-32–Cys-57 and Cys-33–Cys-73. An O-linked (GalNAc...) threonine glycan is attached at Thr-94.

The protein belongs to the intercrine beta (chemokine CC) family. In terms of tissue distribution, expressed constitutively in the thymus. Expression inducible in the lung (type I alveolar epithelial cells), intestine, heart, spleen, kidney.

Its subcellular location is the secreted. Its function is as follows. In response to the presence of allergens, this protein directly promotes the accumulation of eosinophils (a prominent feature of allergic inflammatory reactions), but not lymphocytes, macrophages or neutrophils. Binds to CCR3. In Mus musculus (Mouse), this protein is Eotaxin (Ccl11).